The chain runs to 94 residues: Co-chaperonin GroES (94 aa).

It belongs to the GroES chaperonin family. As to quaternary structure, heptamer of 7 subunits arranged in a ring. Interacts with the chaperonin GroEL.

It localises to the cytoplasm. Its function is as follows. Together with the chaperonin GroEL, plays an essential role in assisting protein folding. The GroEL-GroES system forms a nano-cage that allows encapsulation of the non-native substrate proteins and provides a physical environment optimized to promote and accelerate protein folding. GroES binds to the apical surface of the GroEL ring, thereby capping the opening of the GroEL channel. This is Co-chaperonin GroES from Staphylococcus carnosus (strain TM300).